Here is a 133-residue protein sequence, read N- to C-terminus: S-protein homolog 9 (133 aa).

A signal peptide spans 1 to 20; it reads MNRLSCFLLVIGLCIGLSNA.

This sequence belongs to the plant self-incompatibility (S1) protein family.

It localises to the secreted. This chain is S-protein homolog 9, found in Arabidopsis thaliana (Mouse-ear cress).